The primary structure comprises 282 residues: Averufin oxidase A (282 aa).

This sequence belongs to the avfA family.

Its pathway is mycotoxin biosynthesis; aflatoxin biosynthesis. In terms of biological role, involved in the conversion of averufin (AVF) to versiconal hemiacetal acetate (VHA) in the aflatoxin biosynthesis pathway. In Aspergillus flavus (strain ATCC 200026 / FGSC A1120 / IAM 13836 / NRRL 3357 / JCM 12722 / SRRC 167), this protein is Averufin oxidase A (avfA).